A 97-amino-acid polypeptide reads, in one-letter code: Aspartyl/glutamyl-tRNA(Asn/Gln) amidotransferase subunit C (97 aa).

The protein belongs to the GatC family. Heterotrimer of A, B and C subunits.

It carries out the reaction L-glutamyl-tRNA(Gln) + L-glutamine + ATP + H2O = L-glutaminyl-tRNA(Gln) + L-glutamate + ADP + phosphate + H(+). The enzyme catalyses L-aspartyl-tRNA(Asn) + L-glutamine + ATP + H2O = L-asparaginyl-tRNA(Asn) + L-glutamate + ADP + phosphate + 2 H(+). Allows the formation of correctly charged Asn-tRNA(Asn) or Gln-tRNA(Gln) through the transamidation of misacylated Asp-tRNA(Asn) or Glu-tRNA(Gln) in organisms which lack either or both of asparaginyl-tRNA or glutaminyl-tRNA synthetases. The reaction takes place in the presence of glutamine and ATP through an activated phospho-Asp-tRNA(Asn) or phospho-Glu-tRNA(Gln). This is Aspartyl/glutamyl-tRNA(Asn/Gln) amidotransferase subunit C from Nostoc punctiforme (strain ATCC 29133 / PCC 73102).